We begin with the raw amino-acid sequence, 871 residues long: Alanine--tRNA ligase (871 aa).

Positions 561, 565, 665, and 669 each coordinate Zn(2+).

This sequence belongs to the class-II aminoacyl-tRNA synthetase family. It depends on Zn(2+) as a cofactor.

The protein localises to the cytoplasm. The catalysed reaction is tRNA(Ala) + L-alanine + ATP = L-alanyl-tRNA(Ala) + AMP + diphosphate. Functionally, catalyzes the attachment of alanine to tRNA(Ala) in a two-step reaction: alanine is first activated by ATP to form Ala-AMP and then transferred to the acceptor end of tRNA(Ala). Also edits incorrectly charged Ser-tRNA(Ala) and Gly-tRNA(Ala) via its editing domain. This is Alanine--tRNA ligase from Dehalococcoides mccartyi (strain ATCC BAA-2266 / KCTC 15142 / 195) (Dehalococcoides ethenogenes (strain 195)).